A 282-amino-acid polypeptide reads, in one-letter code: Pantothenate synthetase (282 aa).

30–37 is a binding site for ATP; the sequence is MGALHQGH. Residue His-37 is the Proton donor of the active site. A (R)-pantoate-binding site is contributed by Gln-61. Gln-61 is a binding site for beta-alanine. Position 149–152 (149–152) interacts with ATP; it reads GEKD. A (R)-pantoate-binding site is contributed by Gln-155. ATP is bound by residues Leu-178 and 186–189; that span reads MSSR.

The protein belongs to the pantothenate synthetase family. Homodimer.

The protein localises to the cytoplasm. The enzyme catalyses (R)-pantoate + beta-alanine + ATP = (R)-pantothenate + AMP + diphosphate + H(+). It functions in the pathway cofactor biosynthesis; (R)-pantothenate biosynthesis; (R)-pantothenate from (R)-pantoate and beta-alanine: step 1/1. In terms of biological role, catalyzes the condensation of pantoate with beta-alanine in an ATP-dependent reaction via a pantoyl-adenylate intermediate. The polypeptide is Pantothenate synthetase (Flavobacterium psychrophilum (strain ATCC 49511 / DSM 21280 / CIP 103535 / JIP02/86)).